A 442-amino-acid polypeptide reads, in one-letter code: Radical S-adenosyl methionine domain-containing protein 1, mitochondrial (442 aa).

The N-terminal 17 residues, 1-17 (MVPSGVRTGRWVAAARA), are a transit peptide targeting the mitochondrion. The region spanning 34–270 (ESASTRAALY…RTVLRDAGFR (237 aa)) is the Radical SAM core domain. Position 43 (Y43) interacts with S-adenosyl-L-methionine. Residues C49, C53, and C56 each contribute to the [4Fe-4S] cluster site. S-adenosyl-L-methionine-binding positions include G98, 99–100 (GT), E131, Q158, R170, and D195.

This sequence belongs to the anaerobic coproporphyrinogen-III oxidase family. HemW subfamily. The cofactor is [4Fe-4S] cluster.

It is found in the mitochondrion. In terms of biological role, may be a heme chaperone, appears to bind heme. Homologous bacterial proteins do not have oxygen-independent coproporphyrinogen-III oxidase activity. Binds 1 [4Fe-4S] cluster. The cluster is coordinated with 3 cysteines and an exchangeable S-adenosyl-L-methionine. This Mus musculus (Mouse) protein is Radical S-adenosyl methionine domain-containing protein 1, mitochondrial (Rsad1).